The sequence spans 111 residues: Cytochrome c oxidase subunit 7A2-like, mitochondrial (111 aa).

A mitochondrion-targeting transit peptide spans 1 to 54 (MYYKFSSFTQKLAGAWASEAYTPQGLKPVSTEAPPIIFATPTKLTSSVTAYDYS). K68 carries the N6-acetyllysine modification. Residues 79 to 104 (PDQMLYRTTMALTLGGTIYCLIALYM) traverse the membrane as a helical segment.

This sequence belongs to the cytochrome c oxidase VIIa family.

The protein resides in the mitochondrion inner membrane. Functionally, non-functional protein. In contrast to the protein found in other strains (AC Q99KD6), cannot induce the assembly of mitochondrial respiratory supercomplexes. The polypeptide is Cytochrome c oxidase subunit 7A2-like, mitochondrial (Mus musculus (Mouse)).